The sequence spans 170 residues: CDP-archaeol synthase (170 aa).

5 helical membrane passes run 9-29 (AFWYILPAYFANSSPVVLGGG), 53-73 (GFFGGLIVGTIIGIVQYFLLP), 79-99 (LGIAIELAFLLSLGTLVGDLI), 114-134 (PAVGLDQWGFLIAALCFAYPV), and 140-160 (GEVLFLLVITPLIHWGANIFA).

The protein belongs to the CDP-archaeol synthase family. It depends on Mg(2+) as a cofactor.

The protein localises to the cell membrane. The catalysed reaction is 2,3-bis-O-(geranylgeranyl)-sn-glycerol 1-phosphate + CTP + H(+) = CDP-2,3-bis-O-(geranylgeranyl)-sn-glycerol + diphosphate. It functions in the pathway membrane lipid metabolism; glycerophospholipid metabolism. Functionally, catalyzes the formation of CDP-2,3-bis-(O-geranylgeranyl)-sn-glycerol (CDP-archaeol) from 2,3-bis-(O-geranylgeranyl)-sn-glycerol 1-phosphate (DGGGP) and CTP. This reaction is the third ether-bond-formation step in the biosynthesis of archaeal membrane lipids. The sequence is that of CDP-archaeol synthase from Pyrococcus horikoshii (strain ATCC 700860 / DSM 12428 / JCM 9974 / NBRC 100139 / OT-3).